A 551-amino-acid chain; its full sequence is Podocalyxin (551 aa).

The first 21 residues, 1–21, serve as a signal peptide directing secretion; sequence MRSALALAALLLLLLSPPSLS. The interval 18 to 324 is disordered; it reads PSLSQEKSPQ…QRVSCGPPER (307 aa). Topologically, residues 22 to 452 are extracellular; sequence QEKSPQPGPT…PPEETEDRFS (431 aa). Over residues 32 to 59 the composition is skewed to low complexity; the sequence is PMATSTSTRPAPASAPAPKSSVAASVPA. Polar residues predominate over residues 60–90; that stretch reads EQNTTPMTTKAPATQSPSASPGSSVENSAPA. The segment covering 91–104 has biased composition (low complexity); the sequence is QGSTTTQQSLSVTT. Over residues 142–164 the composition is skewed to polar residues; the sequence is APSNHSITTKPLATEATSQAPRQ. N-linked (GlcNAc...) asparagine glycosylation is found at Asn145 and Asn180. Positions 234-244 are enriched in polar residues; that stretch reads PVASSAETQGM. The span at 289–300 shows a compositional bias: low complexity; the sequence is TSSSTELASTAL. Asn333 carries N-linked (GlcNAc...) asparagine glycosylation. The helical transmembrane segment at 453-473 threads the bilayer; sequence LPLIITIVCMASFLLLVAALY. At 474–551 the chain is on the cytoplasmic side; that stretch reads GCCHQRLSHR…DLDEEEDTHL (78 aa). Position 511 is a phosphothreonine (Thr511). Ser530 is subject to Phosphoserine. Thr549 carries the phosphothreonine modification.

Belongs to the podocalyxin family. Monomer; when associated with the membrane raft. Oligomer; when integrated in the apical membrane. Found in a complex with EZR, PODXL and NHERF2. Associates with the actin cytoskeleton through complex formation with EZR and NHERF2. Interacts (via the C-terminal PDZ-binding motif DTHL) with NHERF1 (via the PDZ domains); interaction is not detected in glomerular epithelium cells, take place early in the secretory pathway and is necessary for its apical membrane sorting. Interacts (via the C-terminal PDZ-binding motif DTHL) with NHERF2 (via the PDZ 1 domain); interaction is detected in glomerular epithelium cells. Interacts with EZR. N- and O-linked glycosylated. Sialoglycoprotein. In terms of tissue distribution, glomerular epithelium cell (podocyte) and endothelial cells.

It localises to the apical cell membrane. The protein resides in the cell projection. It is found in the microvillus. The protein localises to the membrane raft. Its subcellular location is the lamellipodium. It localises to the filopodium. The protein resides in the ruffle. It is found in the membrane. Involved in the regulation of both adhesion and cell morphology and cancer progression. Functions as an anti-adhesive molecule that maintains an open filtration pathway between neighboring foot processes in the podocyte by charge repulsion. Acts as a pro-adhesive molecule, enhancing the adherence of cells to immobilized ligands, increasing the rate of migration and cell-cell contacts in an integrin-dependent manner. Induces the formation of apical actin-dependent microvilli. Involved in the formation of a preapical plasma membrane subdomain to set up initial epithelial polarization and the apical lumen formation during renal tubulogenesis. Plays a role in cancer development and aggressiveness by inducing cell migration and invasion through its interaction with the actin-binding protein EZR. Affects EZR-dependent signaling events, leading to increased activities of the MAPK and PI3K pathways in cancer cells. The polypeptide is Podocalyxin (PODXL) (Oryctolagus cuniculus (Rabbit)).